Here is a 490-residue protein sequence, read N- to C-terminus: Cysteine protease 1 (490 aa).

The N-terminal stretch at 1–31 (MAGGGGKSVAAALAMACFLLILAAFAPPAAA) is a signal peptide. A propeptide spans 32–154 (APPDIMSIIR…EAYRHDGVEA (123 aa)) (activation peptide). Intrachain disulfides connect Cys-177-Cys-220, Cys-211-Cys-253, Cys-311-Cys-364, Cys-395-Cys-407, and Cys-401-Cys-422. Cys-180 is a catalytic residue. Active-site residues include His-317 and Asn-339. The N-linked (GlcNAc...) asparagine glycan is linked to Asn-356. The propeptide at 379 to 490 (NPKPSPPSPA…FVVLNREDLV (112 aa)) is removed in mature form.

It belongs to the peptidase C1 family. Highly expressed in the tapetum and developing pollen of the anther locules. Weakly expressed in root and germinating seed, hardly in the anther-less-flower and not detected in leaf.

Its function is as follows. Cysteine protease that may play a role in pollen development. May be regulated by the transcription factor UDT1 in developing anthers and play a role in tapetum development. Positively regulated by the transcription factor TDR in developing anthers and may play a role in tapetum programmed cell death (PCD). The polypeptide is Cysteine protease 1 (CP1) (Oryza sativa subsp. japonica (Rice)).